We begin with the raw amino-acid sequence, 183 residues long: MKVVSLRRIYSSEIYKLPTTRLHMDTLYYYYFVSHLAAALFVDLPITEWLGGSLSCLSGLRRFYLSTYEDPILLIPAPWKTALFSSELFFQVPFFIWVSLRLRKKARDPVLWVAILIYGVHAFTTTWCCMFELFAEKKWMIMSFYFPYLAIPLWMAIDMGGRLVKSCHAAKSGPSSTITSKSD.

Over 1 to 25 (MKVVSLRRIYSSEIYKLPTTRLHMD) the chain is Cytoplasmic. An EXPERA domain is found at 24 to 156 (MDTLYYYYFV…PYLAIPLWMA (133 aa)). Residues 26–46 (TLYYYYFVSHLAAALFVDLPI) form a helical membrane-spanning segment. The Lumenal portion of the chain corresponds to 47-81 (TEWLGGSLSCLSGLRRFYLSTYEDPILLIPAPWKT). A helical membrane pass occupies residues 82 to 102 (ALFSSELFFQVPFFIWVSLRL). Residues 103 to 110 (RKKARDPV) are Cytoplasmic-facing. The helical transmembrane segment at 111-131 (LWVAILIYGVHAFTTTWCCMF) threads the bilayer. The Lumenal portion of the chain corresponds to 132-138 (ELFAEKK). A helical membrane pass occupies residues 139–159 (WMIMSFYFPYLAIPLWMAIDM). Residues 160 to 183 (GGRLVKSCHAAKSGPSSTITSKSD) lie on the Cytoplasmic side of the membrane.

Belongs to the TMEM97/sigma-2 receptor family.

It localises to the endoplasmic reticulum membrane. Functionally, part of an import route for newly synthesized mitochondrial proteins termed the ER-SURF pathway (ER surface-mediated protein targeting), which retrieves mitochondrial precursor proteins from the ER surface and reroutes them to mitochondria for efficient mitochondrial import. Acts as a quality control factor in the ER, promoting the proteolytic degradation of nonproductive and extramitochondrial precursor proteins in the ER membrane thus removing them from the ER surface. The polypeptide is Efficient mitochondria targeting-associated protein 19 (ema19) (Schizosaccharomyces pombe (strain 972 / ATCC 24843) (Fission yeast)).